The following is a 305-amino-acid chain: Tetraspanin-12 (305 aa).

At 1-12 (MAREDSVRCLRC) the chain is on the cytoplasmic side. 2 S-palmitoyl cysteine lipidation sites follow: Cys-9 and Cys-12. The helical transmembrane segment at 13-33 (LLYALNLLFWLMSISVLGVSA) threads the bilayer. The Extracellular segment spans residues 34–59 (WIRDYLNNVLTLTAETRVEEAVILTY). Residues 60-80 (FPVVHPVMIAVCCFLILVGML) form a helical membrane-spanning segment. The Cytoplasmic portion of the chain corresponds to 81 to 89 (GYCGTVKRN). Cys-83 is lipidated: S-palmitoyl cysteine. The chain crosses the membrane as a helical span at residues 90–110 (LLLLVWYFGSLLVIFCVELAC). Topologically, residues 111 to 224 (GVWTYEQEIT…RGTKQLQVLR (114 aa)) are extracellular. Residues 225-245 (FLGISIGVTQILAMILTITLL) form a helical membrane-spanning segment. Residues 246–305 (WALYYDRRDPGADQIMSLKNDTSQQLSCHSVELLKPSLTGIFEHTSMANSFNTHFEMEEL) lie on the Cytoplasmic side of the membrane.

The protein belongs to the tetraspanin (TM4SF) family. In terms of assembly, component of a complex, at least composed of TSPAN12, FZD4 and norrin (NDP). In terms of processing, palmitoylated; required for interaction with ADAM10. The precise position of palmitoylated residues is unclear and occurs either on Cys-9, Cys-12 and/or Cys-83.

The protein localises to the cell membrane. Regulator of cell surface receptor signal transduction. Plays a central role in retinal vascularization by regulating norrin (NDP) signal transduction. Acts in concert with norrin (NDP) to promote FZD4 multimerization and subsequent activation of FZD4, leading to promote accumulation of beta-catenin (CTNNB1) and stimulate LEF/TCF-mediated transcriptional programs. Suprisingly, it only activates the norrin (NDP)-dependent activation of FZD4, while it does not activate the Wnt-dependent activation of FZD4, suggesting the existence of a Wnt-independent signaling that also promote accumulation the beta-catenin (CTNNB1). This is Tetraspanin-12 (TSPAN12) from Gallus gallus (Chicken).